Here is a 150-residue protein sequence, read N- to C-terminus: Deoxyuridine 5'-triphosphate nucleotidohydrolase (150 aa).

Substrate contacts are provided by residues 69-71 (RSG), asparagine 82, 86-88 (LID), and lysine 96.

This sequence belongs to the dUTPase family. The cofactor is Mg(2+).

The enzyme catalyses dUTP + H2O = dUMP + diphosphate + H(+). Its pathway is pyrimidine metabolism; dUMP biosynthesis; dUMP from dCTP (dUTP route): step 2/2. This enzyme is involved in nucleotide metabolism: it produces dUMP, the immediate precursor of thymidine nucleotides and it decreases the intracellular concentration of dUTP so that uracil cannot be incorporated into DNA. This chain is Deoxyuridine 5'-triphosphate nucleotidohydrolase, found in Neisseria meningitidis serogroup A / serotype 4A (strain DSM 15465 / Z2491).